A 182-amino-acid polypeptide reads, in one-letter code: CASP-like protein 2B1 (182 aa).

The Cytoplasmic segment spans residues 1–12; sequence MKLIDRRMRLTE. The helical transmembrane segment at 13–31 threads the bilayer; the sequence is LLLRCSISVFALLALILVV. Residues 32–52 are Extracellular-facing; the sequence is TDTEVKLIFTIKKTAKYTDMK. The chain crosses the membrane as a helical span at residues 53–73; it reads AVVFLVVANGIAAVYSLLQSV. Over 74–89 the chain is Cytoplasmic; sequence RCVVGTMKGKVLFSKP. A helical transmembrane segment spans residues 90 to 110; the sequence is LAWAFFSGDQAMAYLNVAAIA. Residues 111–141 are Extracellular-facing; that stretch reads ATAESGVIAREGEEDLQWMRVCTMYGKFCNQ. A helical transmembrane segment spans residues 142–162; that stretch reads MAIGVSSALLASIAMVFVSCI. Residues 163-182 lie on the Cytoplasmic side of the membrane; sequence SAFSLFRLYGATKDRRTTPW.

The protein belongs to the Casparian strip membrane proteins (CASP) family. In terms of assembly, homodimer and heterodimers.

The protein resides in the cell membrane. The protein is CASP-like protein 2B1 of Arabidopsis thaliana (Mouse-ear cress).